The following is a 914-amino-acid chain: Transcription factor AZF1 (914 aa).

3 disordered regions span residues 1 to 63 (MPPP…ESIS), 93 to 124 (STGGPSSGGAYSNLPRLSTSSTHQPPDLSQIG), and 138 to 275 (QQLQ…NSNQ). A compositionally biased stretch (polar residues) spans 13–34 (QAGQNESQNQSSGEAGEQNQEH). Low complexity predominate over residues 44–56 (QSQPASSQPQHQQ). Ser-61 is modified (phosphoserine). Over residues 107-116 (PRLSTSSTHQ) the composition is skewed to polar residues. Positions 136–158 (QQQQLQNQHRQQQQQQQQQSHQQ) are polyglutamine domain. A compositionally biased stretch (low complexity) spans 138 to 158 (QQLQNQHRQQQQQQQQQSHQQ). The segment covering 164–194 (PSFSTGLTGSSSQYQFLPRNDNTSQPPSKRN) has biased composition (polar residues). 2 stretches are compositionally biased toward low complexity: residues 206 to 222 (FEFFSMQQSQQPQFQPS) and 245 to 275 (SNGTNNSGNMNTNADYESFFNTGTNNSNSNQ). 2 positions are modified to phosphoserine: Ser-286 and Ser-325. Residues 326–415 (LSVNNKANGD…STDTTSNSRK (90 aa)) form a disordered region. Residues 359–390 (DSSNNNNNNNNNNNNENNNDNNNDNNDNSINS) are compositionally biased toward low complexity. Residues 362–386 (NNNNNNNNNNNNENNNDNNNDNNDN) form a polyasparagine domain region. Polar residues predominate over residues 391 to 412 (ATSTNIPNQEDHSLASTDTTSN). 4 C2H2-type zinc fingers span residues 593–615 (HECPYCHRLFSQATHLEVHVRSH), 621–643 (FVCDYCGKRFTQGGNLRTHERLH), 649–671 (YSCDICDKKFSRKGNLAAHLVTH), and 677–702 (FVCKLENCNKTFTQLGNMKAHQNRFH). Disordered stretches follow at residues 743-812 (GIKG…SPTQ) and 853-877 (RLGSSSSSNTNNNNSNFSVGAAPGV). Residues 754-770 (KKSTISSPENHPASTIL) are compositionally biased toward polar residues. 3 stretches are compositionally biased toward low complexity: residues 771 to 782 (NPNTNANNAIAN), 796 to 809 (SSSNSNPGSHSMIS), and 856 to 868 (SSSSSNTNNNNSN).

It localises to the nucleus. Its subcellular location is the cytoplasm. The protein localises to the cytosol. Its function is as follows. Transcription factor involved in the diauxic shift. In the presence of glucose, activates carbon and energy metabolism genes, and in te presence of glycerol-lactate, activates genes needed for cell wall maintenance. Binds to DNA elements with the sequence AAAAGAAA (A4GA3), a motif enriched in the promoters of AZF1-sensitive genes. Required for glucose induction of CLN3 transcription. Also required for proper FLO11 expression. May also function as a corepressor. Functionally, as an intrinsically disordered protein, AZF1 is capable of forming the prion [AZF1+] that confers resistance to the drug radicicol in a gain-of-function manner but decreases the expression of AZF1's target genes. The chain is Transcription factor AZF1 from Saccharomyces cerevisiae (strain ATCC 204508 / S288c) (Baker's yeast).